The chain runs to 387 residues: uncharacterized protein (387 aa).

Belongs to the geranylgeranyl reductase family. ChlP subfamily.

This is an uncharacterized protein from Methanosarcina barkeri (strain Fusaro / DSM 804).